The sequence spans 447 residues: GTPase Der (447 aa).

EngA-type G domains lie at 4–165 (QIIT…PEEE) and 180–357 (LQIV…KIWN). Residues 10-17 (GRPNVGKS), 57-61 (DTPGL), 119-122 (NKCE), 186-193 (GRPNAGKS), 233-237 (DTAGL), and 298-301 (NKWD) each bind GTP. The region spanning 358–443 (KKITTSKLNE…PIRFIYVKTK (86 aa)) is the KH-like domain.

This sequence belongs to the TRAFAC class TrmE-Era-EngA-EngB-Septin-like GTPase superfamily. EngA (Der) GTPase family. In terms of assembly, associates with the 50S ribosomal subunit.

Functionally, GTPase that plays an essential role in the late steps of ribosome biogenesis. This chain is GTPase Der, found in Rickettsia conorii (strain ATCC VR-613 / Malish 7).